The following is a 92-amino-acid chain: Protein S100-A12 (92 aa).

EF-hand domains are found at residues N13–I48 and K49–A84. H16 is a binding site for Cu cation. H16 serves as a coordination point for Zn(2+). Residues S19, K22, and H24 each coordinate Ca(2+). Residue D26 coordinates Cu cation. D26 provides a ligand contact to Zn(2+). Ca(2+) contacts are provided by T27 and E32. A hinge domain region spans residues T38–V53. 5 residues coordinate Ca(2+): D62, N64, D66, Q68, and E73. 2 residues coordinate Cu cation: H86 and H90. Zn(2+) contacts are provided by H86 and H90.

It belongs to the S-100 family. Homodimer. Homooligomer (tetramer or hexamer) in the presence of calcium, zinc and copper ions. Interacts with AGER and both calcium and zinc are essential for the interaction. Interacts with CACYBP in a calcium-dependent manner. As to expression, predominantly expressed by neutrophils, monocytes and activated macrophages. Expressed by eosinophils and macrophages in asthmatic airways in regions where mast cells accumulate. Found in high concentrations in the serum of patients suffering from various inflammatory disorders, such as rheumatoid arthritis, psoriatic arthritis, Crohn's disease, ulcerative colitis, and Kawasaki disease.

It is found in the secreted. Its subcellular location is the cytoplasm. The protein resides in the cytoskeleton. It localises to the cell membrane. Its function is as follows. S100A12 is a calcium-, zinc- and copper-binding protein which plays a prominent role in the regulation of inflammatory processes and immune response. Its pro-inflammatory activity involves recruitment of leukocytes, promotion of cytokine and chemokine production, and regulation of leukocyte adhesion and migration. Acts as an alarmin or a danger associated molecular pattern (DAMP) molecule and stimulates innate immune cells via binding to receptor for advanced glycation endproducts (AGER). Binding to AGER activates the MAP-kinase and NF-kappa-B signaling pathways leading to production of pro-inflammatory cytokines and up-regulation of cell adhesion molecules ICAM1 and VCAM1. Acts as a monocyte and mast cell chemoattractant. Can stimulate mast cell degranulation and activation which generates chemokines, histamine and cytokines inducing further leukocyte recruitment to the sites of inflammation. Can inhibit the activity of matrix metalloproteinases; MMP2, MMP3 and MMP9 by chelating Zn(2+) from their active sites. Possesses filariacidal and filariastatic activity. Calcitermin possesses antifungal activity against C.albicans and is also active against E.coli and P.aeruginosa but not L.monocytogenes and S.aureus. The sequence is that of Protein S100-A12 (S100A12) from Homo sapiens (Human).